The primary structure comprises 592 residues: Protein kinase C zeta type (592 aa).

The region spanning 15 to 98 (RVRLKAHYGG…EGLIIHVFPS (84 aa)) is the PB1 domain. The segment at 79 to 145 (AFRLARQCRD…KRFNRRAYCG (67 aa)) is interaction with SQSTM1. The Phorbol-ester/DAG-type zinc finger occupies 130 to 180 (GHLFQAKRFNRRAYCGQCSERIWGLARQGYRCINCKLLVHKRCHGLVPLTC). Residues 252-518 (FDLIRVIGRG…FSDIKSHAFF (267 aa)) form the Protein kinase domain. ATP-binding positions include 258-266 (IGRGSYAKV) and lysine 281. The active-site Proton acceptor is aspartate 376. Threonine 410 bears the Phosphothreonine; by PDPK1 and PI3K mark. Residues 519 to 590 (RSIDWDLLEK…INPLLLSTEE (72 aa)) enclose the AGC-kinase C-terminal domain. A Phosphothreonine modification is found at threonine 560. Serine 591 is subject to Phosphoserine.

This sequence belongs to the protein kinase superfamily. AGC Ser/Thr protein kinase family. PKC subfamily. In terms of assembly, forms a ternary complex with SQSTM1 and KCNAB2. Forms another ternary complex with SQSTM1 and GABRR3. Forms a complex with SQSTM1 and MAP2K5. Interacts with PARD6A, PARD6B, PARD6G and SQSTM1. Part of a complex with PARD3, PARD6A or PARD6B or PARD6G and CDC42 or RAC1. Interacts with ADAP1/CENTA1. Forms a ternary complex composed of SQSTM1 and PAWR. Interacts directly with SQSTM1. Interacts with IKBKB. Interacts (via the protein kinase domain) with WWC1. Forms a tripartite complex with WWC1 and DDR1, but predominantly in the absence of collagen. Component of the Par polarity complex, composed of at least phosphorylated PRKCZ, PARD3 and TIAM1. Interacts with PDPK1 (via N-terminal region). Interacts with WDFY2 (via WD repeats 1-3). Interacts with VAMP2. Forms a complex with WDFY2 and VAMP2. Interacts with APPL1. Interacts with WWC1, WWC2 and WWC3. CDH5 is required for its phosphorylation at Thr-410. Phosphorylated by protein kinase PDPK1; phosphorylation is inhibited by the apoptotic C-terminal cleavage product of PKN2. Phosphorylation at Thr-410 by PI3K activates the kinase. In terms of tissue distribution, expressed in brain, and to a lesser extent in lung, kidney and testis.

Its subcellular location is the cytoplasm. The protein localises to the endosome. It localises to the cell junction. It is found in the membrane. It carries out the reaction L-seryl-[protein] + ATP = O-phospho-L-seryl-[protein] + ADP + H(+). It catalyses the reaction L-threonyl-[protein] + ATP = O-phospho-L-threonyl-[protein] + ADP + H(+). Atypical PKCs (PRKCI and PRKCZ) exhibit an elevated basal enzymatic activity (that may be due to the interaction with SMG1 or SQSTM1) and are not regulated by diacylglycerol, phosphatidylserine, phorbol esters or calcium ions. Two specific sites, Thr-410 (activation loop of the kinase domain) and Thr-560 (turn motif), need to be phosphorylated for its full activation. Phosphatidylinositol 3,4,5-trisphosphate might be a physiological activator. Isoform 2: Constitutively active. Its function is as follows. Calcium- and diacylglycerol-independent serine/threonine-protein kinase that functions in phosphatidylinositol 3-kinase (PI3K) pathway and mitogen-activated protein (MAP) kinase cascade, and is involved in NF-kappa-B activation, mitogenic signaling, cell proliferation, cell polarity, inflammatory response and maintenance of long-term potentiation (LTP). Upon lipopolysaccharide (LPS) treatment in macrophages, or following mitogenic stimuli, functions downstream of PI3K to activate MAP2K1/MEK1-MAPK1/ERK2 signaling cascade independently of RAF1 activation. Required for insulin-dependent activation of AKT3, but may function as an adapter rather than a direct activator. Upon insulin treatment may act as a downstream effector of PI3K and contribute to the activation of translocation of the glucose transporter SLC2A4/GLUT4 and subsequent glucose transport in adipocytes. In EGF-induced cells, binds and activates MAP2K5/MEK5-MAPK7/ERK5 independently of its kinase activity and can activate JUN promoter through MEF2C. Through binding with SQSTM1/p62, functions in interleukin-1 signaling and activation of NF-kappa-B with the specific adapters RIPK1 and TRAF6. Participates in TNF-dependent transactivation of NF-kappa-B by phosphorylating and activating IKBKB kinase, which in turn leads to the degradation of NF-kappa-B inhibitors. In migrating astrocytes, forms a cytoplasmic complex with PARD6A and is recruited by CDC42 to function in the establishment of cell polarity along with the microtubule motor and dynein. In association with FEZ1, stimulates neuronal differentiation in PC12 cells. In the inflammatory response, is required for the T-helper 2 (Th2) differentiation process, including interleukin production, efficient activation of JAK1 and the subsequent phosphorylation and nuclear translocation of STAT6. May be involved in development of allergic airway inflammation (asthma), a process dependent on Th2 immune response. In the NF-kappa-B-mediated inflammatory response, can relieve SETD6-dependent repression of NF-kappa-B target genes by phosphorylating the RELA subunit at 'Ser-311'. Phosphorylates VAMP2 in vitro. Phosphorylates and activates LRRK1, which phosphorylates RAB proteins involved in intracellular trafficking. Involved in late synaptic long term potention phase in CA1 hippocampal cells and long term memory maintenance. The polypeptide is Protein kinase C zeta type (PRKCZ) (Homo sapiens (Human)).